Here is a 417-residue protein sequence, read N- to C-terminus: MIDLRLLRENPDIVRASQRARGEDPALVDALLAADTARRSAVSAADNLRAEQKAASKLVGKASPDERPALLQRAKDLAEQVKAAEAAQAEAEQAFTAAHMAISNVIFEGVPAGGEDDFVVLDTVGEPRAIENPKDHLELGESLGLIDMERGAKVSGSRFYFLTGAGALLQLGLLQLATQVAVQNGFTLMIPPVLVRPEVMRGTGFLGAHADEVYRLEADDMYLVGTSEVPLAGYHADEILDLSAGPRRYAGWSSCFRREAGSYGKDTRGIIRVHQFDKVEGFIYCKPEDAEAEHQRLLGWQREMLAAIEVPYRVIDVAAGDLGSSAARKYDCEAWVPTQQTYRELTSTSNCTTFQARRLSTRYRDDNGKPQIAATLNGTLATTRWLVAILENHQQPDGSVRVPAALVPYVRTEVLEP.

226–228 (TSE) is an L-serine binding site. ATP is bound by residues 257 to 259 (RRE) and Val273. Residue Glu280 coordinates L-serine. 344 to 347 (ELTS) contacts ATP. Position 379 (Thr379) interacts with L-serine.

Belongs to the class-II aminoacyl-tRNA synthetase family. Type-1 seryl-tRNA synthetase subfamily. In terms of assembly, homodimer. The tRNA molecule binds across the dimer.

It localises to the cytoplasm. It carries out the reaction tRNA(Ser) + L-serine + ATP = L-seryl-tRNA(Ser) + AMP + diphosphate + H(+). It catalyses the reaction tRNA(Sec) + L-serine + ATP = L-seryl-tRNA(Sec) + AMP + diphosphate + H(+). It functions in the pathway aminoacyl-tRNA biosynthesis; selenocysteinyl-tRNA(Sec) biosynthesis; L-seryl-tRNA(Sec) from L-serine and tRNA(Sec): step 1/1. In terms of biological role, catalyzes the attachment of serine to tRNA(Ser). Is also able to aminoacylate tRNA(Sec) with serine, to form the misacylated tRNA L-seryl-tRNA(Sec), which will be further converted into selenocysteinyl-tRNA(Sec). The sequence is that of Serine--tRNA ligase from Mycolicibacterium smegmatis (strain ATCC 700084 / mc(2)155) (Mycobacterium smegmatis).